The chain runs to 627 residues: Phosphomethylpyrimidine synthase (627 aa).

Polar residues predominate over residues 1–24 (MSATQKNNITRLEQLDRQSTQPFP). The disordered stretch occupies residues 1 to 29 (MSATQKNNITRLEQLDRQSTQPFPNSRKV). Residues N231, M260, Y289, H325, 345-347 (SRG), 386-389 (DGLR), and E425 each bind substrate. H429 is a binding site for Zn(2+). Y452 is a binding site for substrate. H493 lines the Zn(2+) pocket. Residues C573, C576, and C581 each coordinate [4Fe-4S] cluster.

This sequence belongs to the ThiC family. Homodimer. The cofactor is [4Fe-4S] cluster.

It carries out the reaction 5-amino-1-(5-phospho-beta-D-ribosyl)imidazole + S-adenosyl-L-methionine = 4-amino-2-methyl-5-(phosphooxymethyl)pyrimidine + CO + 5'-deoxyadenosine + formate + L-methionine + 3 H(+). It participates in cofactor biosynthesis; thiamine diphosphate biosynthesis. In terms of biological role, catalyzes the synthesis of the hydroxymethylpyrimidine phosphate (HMP-P) moiety of thiamine from aminoimidazole ribotide (AIR) in a radical S-adenosyl-L-methionine (SAM)-dependent reaction. This is Phosphomethylpyrimidine synthase from Pseudomonas aeruginosa (strain UCBPP-PA14).